The sequence spans 167 residues: uncharacterized protein (167 aa).

His48, His127, and His131 together coordinate a divalent metal cation.

It belongs to the DinB family.

This is an uncharacterized protein from Bacillus subtilis (strain 168).